The following is a 151-amino-acid chain: Aspartate carbamoyltransferase regulatory chain (151 aa).

Residues C108, C113, C136, and C139 each contribute to the Zn(2+) site.

The protein belongs to the PyrI family. Contains catalytic and regulatory chains. It depends on Zn(2+) as a cofactor.

Its function is as follows. Involved in allosteric regulation of aspartate carbamoyltransferase. The chain is Aspartate carbamoyltransferase regulatory chain from Porphyromonas gingivalis (strain ATCC 33277 / DSM 20709 / CIP 103683 / JCM 12257 / NCTC 11834 / 2561).